Consider the following 193-residue polypeptide: Large ribosomal subunit protein bL25 (193 aa).

It belongs to the bacterial ribosomal protein bL25 family. CTC subfamily. As to quaternary structure, part of the 50S ribosomal subunit; part of the 5S rRNA/L5/L18/L25 subcomplex. Contacts the 5S rRNA. Binds to the 5S rRNA independently of L5 and L18.

Its function is as follows. This is one of the proteins that binds to the 5S RNA in the ribosome where it forms part of the central protuberance. In Hydrogenovibrio crunogenus (strain DSM 25203 / XCL-2) (Thiomicrospira crunogena), this protein is Large ribosomal subunit protein bL25.